Reading from the N-terminus, the 1007-residue chain is Bifunctional glutamine synthetase adenylyltransferase/adenylyl-removing enzyme (1007 aa).

An adenylyl removase region spans residues 1-496 (MTREQLSLTV…LHERLFYRPL (496 aa)). Residues 505-1007 (NEDARLSGEA…GPPQRPATTA (503 aa)) form an adenylyl transferase region.

This sequence belongs to the GlnE family. Mg(2+) is required as a cofactor.

The enzyme catalyses [glutamine synthetase]-O(4)-(5'-adenylyl)-L-tyrosine + phosphate = [glutamine synthetase]-L-tyrosine + ADP. The catalysed reaction is [glutamine synthetase]-L-tyrosine + ATP = [glutamine synthetase]-O(4)-(5'-adenylyl)-L-tyrosine + diphosphate. Functionally, involved in the regulation of glutamine synthetase GlnA, a key enzyme in the process to assimilate ammonia. When cellular nitrogen levels are high, the C-terminal adenylyl transferase (AT) inactivates GlnA by covalent transfer of an adenylyl group from ATP to specific tyrosine residue of GlnA, thus reducing its activity. Conversely, when nitrogen levels are low, the N-terminal adenylyl removase (AR) activates GlnA by removing the adenylyl group by phosphorolysis, increasing its activity. The regulatory region of GlnE binds the signal transduction protein PII (GlnB) which indicates the nitrogen status of the cell. The chain is Bifunctional glutamine synthetase adenylyltransferase/adenylyl-removing enzyme from Leifsonia xyli subsp. xyli (strain CTCB07).